The primary structure comprises 200 residues: Pyridoxal 5'-phosphate synthase subunit PdxT (200 aa).

52 to 54 (GES) provides a ligand contact to L-glutamine. Cys-84 acts as the Nucleophile in catalysis. L-glutamine-binding positions include Arg-116 and 145-146 (IR). Active-site charge relay system residues include His-181 and Glu-183.

It belongs to the glutaminase PdxT/SNO family. In the presence of PdxS, forms a dodecamer of heterodimers. Only shows activity in the heterodimer.

It carries out the reaction aldehydo-D-ribose 5-phosphate + D-glyceraldehyde 3-phosphate + L-glutamine = pyridoxal 5'-phosphate + L-glutamate + phosphate + 3 H2O + H(+). The enzyme catalyses L-glutamine + H2O = L-glutamate + NH4(+). Its pathway is cofactor biosynthesis; pyridoxal 5'-phosphate biosynthesis. Its function is as follows. Catalyzes the hydrolysis of glutamine to glutamate and ammonia as part of the biosynthesis of pyridoxal 5'-phosphate. The resulting ammonia molecule is channeled to the active site of PdxS. The protein is Pyridoxal 5'-phosphate synthase subunit PdxT of Saccharolobus islandicus (strain M.16.27) (Sulfolobus islandicus).